The primary structure comprises 74 residues: Translation initiation factor IF-1 (74 aa).

An S1-like domain is found at 1-72; it reads MSKEDAIEME…NKGRITYRLK (72 aa).

Belongs to the IF-1 family. In terms of assembly, component of the 30S ribosomal translation pre-initiation complex which assembles on the 30S ribosome in the order IF-2 and IF-3, IF-1 and N-formylmethionyl-tRNA(fMet); mRNA recruitment can occur at any time during PIC assembly.

The protein localises to the cytoplasm. One of the essential components for the initiation of protein synthesis. Stabilizes the binding of IF-2 and IF-3 on the 30S subunit to which N-formylmethionyl-tRNA(fMet) subsequently binds. Helps modulate mRNA selection, yielding the 30S pre-initiation complex (PIC). Upon addition of the 50S ribosomal subunit IF-1, IF-2 and IF-3 are released leaving the mature 70S translation initiation complex. This is Translation initiation factor IF-1 from Synechococcus sp. (strain JA-2-3B'a(2-13)) (Cyanobacteria bacterium Yellowstone B-Prime).